The following is a 192-amino-acid chain: Protein SHORT HYPOCOTYL IN WHITE LIGHT 1 (192 aa).

The Nuclear localization signal motif lies at 43–50 (FRRLNRSL). The tract at residues 70 to 92 (GGDNYDVVPDDDGFSDDDDEEDE) is disordered. Acidic residues predominate over residues 77-92 (VPDDDGFSDDDDEEDE). A run of 2 helical transmembrane segments spans residues 122–142 (ILPAAMSPRLVSFAVDGILLL) and 159–179 (GGTVFTVILLIRLFWAAASFF).

In terms of assembly, interacts with HY5 and COP1 in the nucleus. As to expression, expressed in young seedlings (e.g. hypocotyl and cotyledons) and in green tissues (e.g. leaves, stems, sepals, and young siliques).

It localises to the nucleus membrane. Its function is as follows. Negative regulator of photomorphogenesis modulating both light and abscisic acid (ABA) signaling pathways. Negatively regulates the light-mediated inhibition of hypocotyl elongation, probably in a PHYB-mediated signaling pathway, but promotes flowering time (especially in long days) and lateral root formation. Enhances light-regulated gene expression. Promotes COP1-mediated degradation of HY5 during seedling development (e.g. hypocotyl growth) through enhanced ubiquitination in the darkness. Also involved in root gravitropism. This chain is Protein SHORT HYPOCOTYL IN WHITE LIGHT 1, found in Arabidopsis thaliana (Mouse-ear cress).